The sequence spans 152 residues: Deoxyuridine 5'-triphosphate nucleotidohydrolase (152 aa).

Substrate contacts are provided by residues 71–73, N84, 88–90, and M98; these read RSG and LID.

It belongs to the dUTPase family. It depends on Mg(2+) as a cofactor.

The enzyme catalyses dUTP + H2O = dUMP + diphosphate + H(+). Its pathway is pyrimidine metabolism; dUMP biosynthesis; dUMP from dCTP (dUTP route): step 2/2. Functionally, this enzyme is involved in nucleotide metabolism: it produces dUMP, the immediate precursor of thymidine nucleotides and it decreases the intracellular concentration of dUTP so that uracil cannot be incorporated into DNA. The protein is Deoxyuridine 5'-triphosphate nucleotidohydrolase of Cronobacter sakazakii (strain ATCC BAA-894) (Enterobacter sakazakii).